We begin with the raw amino-acid sequence, 430 residues long: V-type ATP synthase beta chain 1 (430 aa).

It belongs to the ATPase alpha/beta chains family.

Functionally, produces ATP from ADP in the presence of a proton gradient across the membrane. The V-type beta chain is a regulatory subunit. This Treponema pallidum (strain Nichols) protein is V-type ATP synthase beta chain 1 (atpB1).